The chain runs to 183 residues: MKFSLFFSVFFLAVLHACLSESEIDLEDEEHFMSSDSFLSEIQDESRGKTCIERNKECTNDRHGCCRGKIFKDKCTCVKSGKTEKCVCTQKKWAKIIESYIGDIPALPKPVDDKCVPKHADCSKRKDDCCKGGIFKYQCKCYDMYDDDGEKTDLCGCVSPVEHQAIEGALRIAKKLIGDRWGR.

Residues 1–20 (MKFSLFFSVFFLAVLHACLS) form the signal peptide. A propeptide spanning residues 21–47 (ESEIDLEDEEHFMSSDSFLSEIQDESR) is cleaved from the precursor. The short motif at 44–47 (DESR) is the Processing quadruplet motif element. Intrachain disulfides connect Cys-51/Cys-66, Cys-58/Cys-75, Cys-65/Cys-88, Cys-77/Cys-86, Cys-115/Cys-130, Cys-122/Cys-139, Cys-129/Cys-157, and Cys-141/Cys-155. The interval 164-177 (QAIEGALRIAKKLI) is predicted alpha-helix. A Tryptophan amide modification is found at Trp-181.

Belongs to the neurotoxin 19 (CSTX) family. Double-CSTX subfamily. Cleavage of the propeptide depends on the processing quadruplet motif (XXXR, with at least one of X being E). As to expression, expressed by the venom gland.

The protein resides in the secreted. Its subcellular location is the target cell membrane. Spider venom toxin that exhibits cytolytic activity by forming an alpha-helix across the membrane. Lethal to insect larvae. Causes instant paralysis and death in the larvae of the flesh fly (S.carnaria) at doses of 20 ug/g, at doses of less than 10 ug/g causes reversible paralysis. Has cytolytic activity against insect Sf9 cells. Causes stable and irreversible depolarization of fly muscle fibers, leading to contracture at higher toxin concentrations. Destabilizes membranes. The sequence is that of DELTA-miturgitoxin-Cp1c from Cheiracanthium punctorium (Yellow sac spider).